Consider the following 220-residue polypeptide: Glutathione S-transferase-like protein FUS3 (220 aa).

The 82-residue stretch at 3 to 84 folds into the GST N-terminal domain; it reads SFGTLYTYMP…YVAQSGPQAS (82 aa). The GST C-terminal domain maps to 90–220; that stretch reads DAMSSAKIRQ…LIEKRRIGAK (131 aa).

This sequence belongs to the GST superfamily.

Functionally, glutathione S-transferase-like protein; part of the gene cluster that mediates the biosynthesis of the mycotoxin fusarin C. Within the cluster, FUS1, FUS2, FUS8 and FUS9 are sufficient for fusarin production. The other FUS cluster members are not essential for fusarin C biosynthesis. This chain is Glutathione S-transferase-like protein FUS3, found in Gibberella moniliformis (strain M3125 / FGSC 7600) (Maize ear and stalk rot fungus).